The chain runs to 413 residues: Alpha-1-antitrypsin 1-4 (413 aa).

The signal sequence occupies residues 1–24 (MTPSISWSLLLLAGLCCLVPSFLA). N-linked (GlcNAc...) asparagine glycans are attached at residues asparagine 64, asparagine 101, and asparagine 265. The RCL stretch occupies residues 368-387 (AATVLQVATYSMPPIVRFDH).

Belongs to the serpin family.

It localises to the secreted. Functionally, inhibitor of serine proteases. Can inhibit trypsin and chymotrypsin; relatively ineffective against elastase. This chain is Alpha-1-antitrypsin 1-4 (Serpina1d), found in Mus musculus (Mouse).